The chain runs to 255 residues: Diphthine synthase (255 aa).

S-adenosyl-L-methionine is bound by residues L9, D85, V88, 113–114 (SI), L164, A207, and H232.

It belongs to the diphthine synthase family. As to quaternary structure, homodimer.

It carries out the reaction 2-[(3S)-amino-3-carboxypropyl]-L-histidyl-[translation elongation factor 2] + 3 S-adenosyl-L-methionine = diphthine-[translation elongation factor 2] + 3 S-adenosyl-L-homocysteine + 3 H(+). It functions in the pathway protein modification; peptidyl-diphthamide biosynthesis. S-adenosyl-L-methionine-dependent methyltransferase that catalyzes the trimethylation of the amino group of the modified target histidine residue in translation elongation factor 2 (EF-2), to form an intermediate called diphthine. The three successive methylation reactions represent the second step of diphthamide biosynthesis. The sequence is that of Diphthine synthase from Methanococcus maripaludis (strain C5 / ATCC BAA-1333).